The chain runs to 457 residues: tRNA-2-methylthio-N(6)-dimethylallyladenosine synthase (457 aa).

The MTTase N-terminal domain occupies lysine 3 to glutamate 120. 6 residues coordinate [4Fe-4S] cluster: cysteine 12, cysteine 49, cysteine 83, cysteine 157, cysteine 161, and cysteine 164. The Radical SAM core domain occupies arginine 143–arginine 377. A TRAM domain is found at glutamine 380 to leucine 447.

This sequence belongs to the methylthiotransferase family. MiaB subfamily. In terms of assembly, monomer. [4Fe-4S] cluster serves as cofactor.

The protein localises to the cytoplasm. It carries out the reaction N(6)-dimethylallyladenosine(37) in tRNA + (sulfur carrier)-SH + AH2 + 2 S-adenosyl-L-methionine = 2-methylsulfanyl-N(6)-dimethylallyladenosine(37) in tRNA + (sulfur carrier)-H + 5'-deoxyadenosine + L-methionine + A + S-adenosyl-L-homocysteine + 2 H(+). In terms of biological role, catalyzes the methylthiolation of N6-(dimethylallyl)adenosine (i(6)A), leading to the formation of 2-methylthio-N6-(dimethylallyl)adenosine (ms(2)i(6)A) at position 37 in tRNAs that read codons beginning with uridine. This Burkholderia thailandensis (strain ATCC 700388 / DSM 13276 / CCUG 48851 / CIP 106301 / E264) protein is tRNA-2-methylthio-N(6)-dimethylallyladenosine synthase.